Consider the following 323-residue polypeptide: Olfactory receptor 4K5 (323 aa).

Residues 1–25 (MDKSNSSVVSEFVLLGLCSSQKLQL) are Extracellular-facing. Asparagine 5 is a glycosylation site (N-linked (GlcNAc...) asparagine). Residues 26–49 (FYFCFFSVLYTVIVLGNLLIILTV) form a helical membrane-spanning segment. The Cytoplasmic portion of the chain corresponds to 50–57 (TSDTSLHS). The chain crosses the membrane as a helical span at residues 58 to 79 (PMYFLLGNLSFVDICQASFATP). The Extracellular portion of the chain corresponds to 80-100 (KMIADFLSAHETISFSGCIAQ). A disulfide bridge links cysteine 97 with cysteine 189. The helical transmembrane segment at 101–120 (IFFIHLFTGGEMVLLVSMAY) threads the bilayer. Residues 121–139 (DRYVAICKPLYYVVIMSRR) are Cytoplasmic-facing. A helical transmembrane segment spans residues 140–158 (TCTVLVMISWAVSLVHTLS). At 159 to 195 (QLSFTVNLPFCGPNVVDSFFCDLPRVTKLACLDSYII) the chain is on the extracellular side. Residues 196–219 (EILIVVNSGILSLSTFSLLVSSYI) form a helical membrane-spanning segment. The Cytoplasmic segment spans residues 220-235 (IILVTVWLKSSAAMAK). A helical transmembrane segment spans residues 236–258 (AFSTLASHIAVVILFFGPCIFIY). The Extracellular portion of the chain corresponds to 259 to 269 (VWPFTISPLDK). Residues 270–289 (FLAIFYTVFTPVLNPIIYTL) traverse the membrane as a helical segment. Over 290–323 (RNRDMKAAVRKIVNHYLRPRRISEMSLVVRTSFH) the chain is Cytoplasmic.

The protein belongs to the G-protein coupled receptor 1 family.

It is found in the cell membrane. In terms of biological role, odorant receptor. The protein is Olfactory receptor 4K5 (OR4K5) of Homo sapiens (Human).